Reading from the N-terminus, the 178-residue chain is MSLNRSEKEAVISDVTGLAAKAQTLVMAEYRGITVADMTKLRSTARSNGVSLSVLKNTLARRAVTGSGFEIVSDLMTGPLIYGFSEDAVAAARVVADFAKTNVKLVIRGGAYGGKALDVNGVKQLASIPSKEVLLAQLLGLMQSPISRTARVLAAIAEKKGAGVADAPVEAAAEAVAA.

Belongs to the universal ribosomal protein uL10 family. Part of the ribosomal stalk of the 50S ribosomal subunit. The N-terminus interacts with L11 and the large rRNA to form the base of the stalk. The C-terminus forms an elongated spine to which L12 dimers bind in a sequential fashion forming a multimeric L10(L12)X complex.

In terms of biological role, forms part of the ribosomal stalk, playing a central role in the interaction of the ribosome with GTP-bound translation factors. The sequence is that of Large ribosomal subunit protein uL10 from Albidiferax ferrireducens (strain ATCC BAA-621 / DSM 15236 / T118) (Rhodoferax ferrireducens).